Here is a 229-residue protein sequence, read N- to C-terminus: Ribose-5-phosphate isomerase A (229 aa).

Residues 28-31, 85-88, and 98-101 each bind substrate; these read TGST, DGAD, and KGRG. E107 serves as the catalytic Proton acceptor. K125 serves as a coordination point for substrate.

Belongs to the ribose 5-phosphate isomerase family. Homodimer.

The catalysed reaction is aldehydo-D-ribose 5-phosphate = D-ribulose 5-phosphate. Its pathway is carbohydrate degradation; pentose phosphate pathway; D-ribose 5-phosphate from D-ribulose 5-phosphate (non-oxidative stage): step 1/1. Its function is as follows. Catalyzes the reversible conversion of ribose-5-phosphate to ribulose 5-phosphate. This chain is Ribose-5-phosphate isomerase A, found in Pyrococcus furiosus (strain ATCC 43587 / DSM 3638 / JCM 8422 / Vc1).